The sequence spans 257 residues: Phosphate import ATP-binding protein PstB (257 aa).

The ABC transporter domain maps to 5–246 (LEIKDLTAFY…EVIFTSPKNE (242 aa)). 37-44 (GPSGCGKS) contributes to the ATP binding site.

Belongs to the ABC transporter superfamily. Phosphate importer (TC 3.A.1.7) family. As to quaternary structure, the complex is composed of two ATP-binding proteins (PstB), two transmembrane proteins (PstC and PstA) and a solute-binding protein (PstS).

It localises to the cell membrane. The catalysed reaction is phosphate(out) + ATP + H2O = ADP + 2 phosphate(in) + H(+). Its function is as follows. Part of the ABC transporter complex PstSACB involved in phosphate import. Responsible for energy coupling to the transport system. This chain is Phosphate import ATP-binding protein PstB, found in Tropheryma whipplei (strain Twist) (Whipple's bacillus).